We begin with the raw amino-acid sequence, 405 residues long: Nicotinate phosphoribosyltransferase (405 aa).

Residue H224 is modified to Phosphohistidine; by autocatalysis.

This sequence belongs to the NAPRTase family. In terms of processing, transiently phosphorylated on a His residue during the reaction cycle. Phosphorylation strongly increases the affinity for substrates and increases the rate of nicotinate D-ribonucleotide production. Dephosphorylation regenerates the low-affinity form of the enzyme, leading to product release.

It catalyses the reaction nicotinate + 5-phospho-alpha-D-ribose 1-diphosphate + ATP + H2O = nicotinate beta-D-ribonucleotide + ADP + phosphate + diphosphate. The protein operates within cofactor biosynthesis; NAD(+) biosynthesis; nicotinate D-ribonucleotide from nicotinate: step 1/1. Catalyzes the synthesis of beta-nicotinate D-ribonucleotide from nicotinate and 5-phospho-D-ribose 1-phosphate at the expense of ATP. This Methanococcoides burtonii (strain DSM 6242 / NBRC 107633 / OCM 468 / ACE-M) protein is Nicotinate phosphoribosyltransferase.